A 247-amino-acid polypeptide reads, in one-letter code: MWGPGVTAEGLSVAPAPPPLLPLLLLLALALVAPSRGGGGCAELACGERERCCDATNATAVRCCKLPLHAFLDNVGWFVRKLSGLLILLVLFAIGYFLQRIICPSPRRYPRGQARPGQRPGPPGGAGPLGGAGPPDDDDDSPALLRDEAAAGSQDSLLDSGGGGRGRGGGGRSDPSCASEHEMRVVSPVFLQLPSYEEVKYLPTYEESMRLQQLSPGEVVLPVSVLGRPRGGVAAEPDGGEGRYPLI.

Positions 1 to 35 (MWGPGVTAEGLSVAPAPPPLLPLLLLLALALVAPS) are cleaved as a signal peptide. An N-linked (GlcNAc...) asparagine glycan is attached at asparagine 57. The helical transmembrane segment at 82–102 (LSGLLILLVLFAIGYFLQRII) threads the bilayer. The interval 109 to 179 (YPRGQARPGQ…GGRSDPSCAS (71 aa)) is disordered. Residues 160-172 (SGGGGRGRGGGGR) show a composition bias toward gly residues.

It localises to the membrane. This is an uncharacterized protein from Homo sapiens (Human).